A 373-amino-acid chain; its full sequence is D-amino-acid transaminase, chloroplastic (373 aa).

Residues methionine 1–leucine 57 constitute a chloroplast transit peptide. Arginine 128 lines the pyridoxal 5'-phosphate pocket. The active-site Proton acceptor is lysine 222. Lysine 222 carries the N6-(pyridoxal phosphate)lysine modification. Glutamate 255 is a pyridoxal 5'-phosphate binding site.

Belongs to the class-IV pyridoxal-phosphate-dependent aminotransferase family. As to quaternary structure, homodimer. Pyridoxal 5'-phosphate is required as a cofactor.

It is found in the plastid. The protein localises to the chloroplast. The enzyme catalyses D-alanine + 2-oxoglutarate = D-glutamate + pyruvate. The catalysed reaction is 4-amino-4-deoxychorismate = 4-aminobenzoate + pyruvate + H(+). It participates in cofactor biosynthesis; tetrahydrofolate biosynthesis; 4-aminobenzoate from chorismate: step 2/2. With respect to regulation, inhibited by hydroxylamine or amino-oxyacetic acid. Its function is as follows. Amino acid aminotransferase showing activity for D-Asp and D-Ala as amino donors with 2-oxoglutarate as an amino acceptor. Can also use D-Met, D-Tyr, D-Phe, D-Gln, D-Trp and D-Asn as substrates, but no activity with L-Asp, L-Ala, L-Leu, L-Ile or L-Val. Also catalyzes the reverse reaction where an amino group is transferred from D-Glu to pyruvate or oxaloacetate to produce D-Ala or D-Asp, respectively. Also involved in folate biosynthesis, acting as an aminodeoxychorismate lyase converting 4-amino-4-deoxychorismate (ADC) to p-aminobenzoate (PABA). The polypeptide is D-amino-acid transaminase, chloroplastic (Arabidopsis thaliana (Mouse-ear cress)).